The primary structure comprises 555 residues: uncharacterized protein (555 aa).

ABC transporter domains lie at 4-244 and 255-547; these read VKVK…PPYK and IQVR…ARFM. Residues 36-43 and 292-299 contribute to the ATP site; these read GKSGAGKS and GPSGVGKT.

The protein belongs to the ABC transporter superfamily.

This is an uncharacterized protein from Methanocaldococcus jannaschii (strain ATCC 43067 / DSM 2661 / JAL-1 / JCM 10045 / NBRC 100440) (Methanococcus jannaschii).